Reading from the N-terminus, the 221-residue chain is CDC5 pindle pole body anchor protein 1 (221 aa).

The interval 142–221 (KNIERDNLKP…PTEDSVPHAE (80 aa)) is disordered. 3 positions are modified to phosphoserine: S158, S170, and S175. Positions 165-170 (PLVTSS) match the CDC5-binding motif. Positions 166 to 188 (LVTSSPIHMSPLQSRQRPVSSLQ) are enriched in polar residues. Positions 189–195 (PPKGPNF) match the CLB3-docking motif. The short motif at 200–202 (PKL) is the CDC14-binding element.

As to quaternary structure, interacts with CDC5 and CDC14. Post-translationally, phosphorylated by CLB3-CDK1 in metaphase which is required for correct localization at the nuclear envelop and the spindle pole body, and dephosphorylated by CDC14 in early anaphase.

The protein localises to the nucleus membrane. It localises to the cytoplasm. It is found in the cytoskeleton. Its subcellular location is the microtubule organizing center. The protein resides in the spindle pole body. Specialized component of the nuclear membrane that may be involved in the connection of the spindle pole body (SPB) to the nuclear envelope. Recruits CDC5 to spindle pole bodies in metaphase. This chain is CDC5 pindle pole body anchor protein 1, found in Saccharomyces cerevisiae (strain ATCC 204508 / S288c) (Baker's yeast).